A 497-amino-acid chain; its full sequence is MTPAAERRPLLPFGYARAHSVMLLSSGESCEVFCLAVTAPQALLEARRVAAMPFRLERLEEEAFEKLLVLSYQRDSAEARRMMADIGNELDLYTLAEELPDTDDLLDSEDDAPIIRLINAMLTEAIKEKASDIHIETYERHLQIRFRVDGVLREILRPQRRLAALLISRIKVMASLDIAEKRIPQDGRMALRIGGRAVDVRVSTLPSSYGERVVLRLLDKNSVNLDLLTLGMTPALLRQVDGLIARPHGIVLVTGPTGSGKSTTLYAALSRLDARERNIMTIEDPIEYELEGIGQTQVNAKVDMTFARGLRAILRQDPDVVLVGEIRDGETAQIAVQASLTGHLVLSTLHTNSALGAISRLQDMGVEPFLLSTSLLAVMSQRLVRRLCPHCRQQEPANADTAHQMEIAPGTALWQPRGCAECGFTGYRGRTGIHELLLVDDRVRMAIHRGENEVTLIQQLGTDYMTLRRAGREKALAGITSWQEVLRVTEQPIAEAC.

255–262 is an ATP binding site; sequence GPTGSGKS. Positions 388, 391, 419, and 422 each coordinate Zn(2+).

Belongs to the GSP E family. As to quaternary structure, forms homooligomers; most probably hexamers. Interacts with PulL/GspL. Zn(2+) serves as cofactor.

Its subcellular location is the cell inner membrane. It catalyses the reaction ATP + H2O + cellular proteinSide 1 = ADP + phosphate + cellular proteinSide 2.. In terms of biological role, ATPase component of the type II secretion system required for the energy-dependent secretion of extracellular factors such as proteases and toxins from the periplasm. Acts as a molecular motor to provide the energy that is required for assembly of the pseudopilus and the extrusion of substrates generated in the cytoplasm. The polypeptide is Type II secretion system protein E (pulE) (Klebsiella pneumoniae).